An 819-amino-acid chain; its full sequence is DNA replication licensing factor Mcm3 (819 aa).

Residues 290-496 enclose the MCM domain; sequence IFELLSKSLA…DVDQMISDHV (207 aa). Positions 348, 388, 389, 390, and 392 each coordinate ADP. Positions 472–475 match the Arginine finger motif; that stretch reads SRFD. Phosphoserine is present on S522. At Y538 the chain carries Phosphotyrosine. The disordered stretch occupies residues 655–717; the sequence is DRPSKRRRNS…DAGDLTRRET (63 aa). A phosphoserine mark is found at S664, S666, S680, and S682. Residues T690 and T692 each carry the phosphothreonine modification. Phosphoserine is present on residues S697, S735, and S739.

Belongs to the MCM family. Component of the Mcm2-7 complex. The complex forms a toroidal hexameric ring with the proposed subunit order Mcm2-Mcm6-Mcm4-Mcm7-Mcm3-Mcm5.

Its subcellular location is the nucleus. It is found in the chromosome. The enzyme catalyses ATP + H2O = ADP + phosphate + H(+). In terms of biological role, acts as a component of the Mcm2-7 complex (Mcm complex) (Mcm complex) which is the putative replicative helicase essential for 'once per cell cycle' DNA replication initiation and elongation in eukaryotic cells. Core component of CDC45-MCM-GINS (CMG) helicase, the molecular machine that unwinds template DNA during replication, and around which the replisome is built. The active ATPase sites in the Mcm2-7 ring are formed through the interaction surfaces of two neighboring subunits such that a critical structure of a conserved arginine finger motif is provided in trans relative to the ATP-binding site of the Walker A box of the adjacent subunit. The six ATPase active sites, however, are likely to contribute differentially to the complex helicase activity. The protein is DNA replication licensing factor Mcm3 (Mcm3) of Drosophila melanogaster (Fruit fly).